Reading from the N-terminus, the 69-residue chain is Putative membrane protein insertion efficiency factor (69 aa).

The protein belongs to the UPF0161 family.

The protein localises to the cell membrane. In terms of biological role, could be involved in insertion of integral membrane proteins into the membrane. In Clostridium perfringens (strain SM101 / Type A), this protein is Putative membrane protein insertion efficiency factor.